The primary structure comprises 493 residues: MSFKDLRSFIDHLETNGELKRISHPVDPHLEMTEIADRVLRAKGPALLFENPVGNDMPVLANLFGTPKRVAMALGKEDPLALRDVGELLAFLKEPEPPRGFKDAISKIPMFKQALNMPPKTVRNPPCQQVVKTGDEVDLTKLPIQHCWPGDVAPLVTWGLTITKGPRQKRQNLGIYRQQLLGRDKLIMRWLDHRGGALDFKDFKEKHPGERYPVVVALGADPVTILGAVTPVPDAMSEYAFAGLLRGERTEVCKALSCDLEVPATSEIILEGYIDPDEMAEEGPYGDHTGYYNETDSFPVFTVTHITHRKDAIYHSTYTGRPPDEPAMLGVALNEVFVPILRKQYPEIIDFYLPPEGCSYRMAVISIRKQYPGHAKRVMMGAWSFLRQFMYTKFIVVVDEDVNCRDWNDVIWAITTRMDPKRDTVMIENTPIDYLDFASPVAGLGSKMGMDATNKWEGETDREWGTPIVMDEAVKQKVDAIWDDLGIDDAPTL.

N172 provides a ligand contact to Mn(2+). Prenylated FMN contacts are provided by residues 175 to 177 (IYR), 189 to 191 (RWL), and 194 to 195 (RG). E238 serves as a coordination point for Mn(2+). D287 acts as the Proton donor in catalysis.

This sequence belongs to the UbiD family. As to quaternary structure, homohexamer. The cofactor is prenylated FMN. Requires Mn(2+) as cofactor.

The protein resides in the cell membrane. The enzyme catalyses a 4-hydroxy-3-(all-trans-polyprenyl)benzoate + H(+) = a 2-(all-trans-polyprenyl)phenol + CO2. The protein operates within cofactor biosynthesis; ubiquinone biosynthesis. Its function is as follows. Catalyzes the decarboxylation of 3-octaprenyl-4-hydroxy benzoate to 2-octaprenylphenol, an intermediate step in ubiquinone biosynthesis. This is 3-octaprenyl-4-hydroxybenzoate carboxy-lyase from Shewanella pealeana (strain ATCC 700345 / ANG-SQ1).